Reading from the N-terminus, the 642-residue chain is Chaperone protein DnaK (642 aa).

Residue Thr198 is modified to Phosphothreonine; by autocatalysis. The span at 578-589 (DDKEAIESRMQK) shows a compositional bias: basic and acidic residues. Residues 578-642 (DDKEAIESRM…FEEVKDGDKK (65 aa)) are disordered. The span at 603–619 (AEQAAQQGGDAGAQAED) shows a compositional bias: low complexity.

It belongs to the heat shock protein 70 family.

Acts as a chaperone. The polypeptide is Chaperone protein DnaK (Hahella chejuensis (strain KCTC 2396)).